The following is a 163-amino-acid chain: MLQHHWNKPDLEARFPVNSVVRYSGGGLKRILGMSGVVTGHSHTGLVKVRFGTQYAEVLPNNLIPLPKADVKTPNVEAPKTEVKSDVTHPNHYMLFDNVEAIEVIARSMTVEAFRGYCLGNILKYRLRAGKKSELATMDKDLKKAAFYQELFDKHRGLCYDAS.

Functionally, the function of this late gene protein is unknown. The sequence is that of Gene 1.7 protein (1.7) from Escherichia coli (Bacteriophage T3).